The chain runs to 95 residues: Opiscorpine-4 (95 aa).

The N-terminal stretch at 1–19 (MNNKLTALIFLGLLAIASC) is a signal peptide. In terms of domain architecture, BetaSPN-type CS-alpha/beta spans 55-95 (EFMCVANIDMTKSCDTHCQKASGEKGYCHGTKCKCGVPLSY). Intrachain disulfides connect cysteine 58/cysteine 82, cysteine 68/cysteine 87, and cysteine 72/cysteine 89.

The protein belongs to the long chain scorpion toxin family. Class 3 subfamily. As to expression, expressed by the venom gland.

The protein resides in the secreted. In terms of biological role, has antimicrobial activity against yeasts and bacteria. The chain is Opiscorpine-4 from Opistophthalmus carinatus (African yellow leg scorpion).